Consider the following 275-residue polypeptide: Membrane protein insertase YidC 1 (275 aa).

Positions M1–A25 are cleaved as a signal peptide. C26 carries the N-palmitoyl cysteine lipid modification. A lipid anchor (S-diacylglycerol cysteine) is attached at C26. Helical transmembrane passes span S58–F78, Y129–L149, L171–L191, V198–F216, and V222–L240.

Belongs to the OXA1/ALB3/YidC family. Type 2 subfamily.

The protein resides in the cell membrane. Required for the insertion and/or proper folding and/or complex formation of integral membrane proteins into the membrane. Involved in integration of membrane proteins that insert both dependently and independently of the Sec translocase complex, as well as at least some lipoproteins. The protein is Membrane protein insertase YidC 1 of Streptococcus pyogenes serotype M1.